A 306-amino-acid chain; its full sequence is ADP,ATP carrier protein ER-ANT1 (306 aa).

Solcar repeat units follow at residues 8–101, 113–205, and 213–299; these read ERFS…FKNL, KWFA…IKPI, and GNFL…LHQI. 5 helical membrane passes run 10–37, 78–102, 111–131, 181–202, and 216–236; these read FSADFVMGGAAAIVAKSAAAPIERVKLL, QANVIRYFPTQASNFAFKGYFKNLL, YLKWFAGNVASGSAAGATTSL, FGVSIVGITLYRGMYFGMYDTI, and LASFLLGWSITTSAGVIAYPF. Positions 83 and 95 each coordinate ADP. R240 provides a ligand contact to ADP. The important for transport activity stretch occupies residues 240 to 245; the sequence is RRRMML. The Nucleotide carrier signature motif motif lies at 240-245; it reads RRRMML. A helical transmembrane segment spans residues 276-296; it reads VTANMLLGVAGAGVLAGYDQL.

Belongs to the mitochondrial carrier (TC 2.A.29) family.

It is found in the endoplasmic reticulum membrane. The enzyme catalyses ADP(in) + ATP(out) = ADP(out) + ATP(in). Its function is as follows. ADP:ATP antiporter that catalyzes the exchange of ADP and ATP across the endoplasmic reticulum membrane. The polypeptide is ADP,ATP carrier protein ER-ANT1 (ER-ANT1) (Arabidopsis thaliana (Mouse-ear cress)).